We begin with the raw amino-acid sequence, 392 residues long: Formate-dependent phosphoribosylglycinamide formyltransferase (392 aa).

N(1)-(5-phospho-beta-D-ribosyl)glycinamide contacts are provided by residues 22–23 (EL) and E82. Residues R114, K155, 160–165 (SSGKGQ), 195–198 (EGVV), and E203 contribute to the ATP site. Residues 119 to 308 (RLAAEELQLP…EFALHVRAFL (190 aa)) enclose the ATP-grasp domain. Mg(2+)-binding residues include E267 and E279. N(1)-(5-phospho-beta-D-ribosyl)glycinamide contacts are provided by residues D286, K355, and 362 to 363 (RR).

The protein belongs to the PurK/PurT family. In terms of assembly, homodimer.

The enzyme catalyses N(1)-(5-phospho-beta-D-ribosyl)glycinamide + formate + ATP = N(2)-formyl-N(1)-(5-phospho-beta-D-ribosyl)glycinamide + ADP + phosphate + H(+). It functions in the pathway purine metabolism; IMP biosynthesis via de novo pathway; N(2)-formyl-N(1)-(5-phospho-D-ribosyl)glycinamide from N(1)-(5-phospho-D-ribosyl)glycinamide (formate route): step 1/1. Its function is as follows. Involved in the de novo purine biosynthesis. Catalyzes the transfer of formate to 5-phospho-ribosyl-glycinamide (GAR), producing 5-phospho-ribosyl-N-formylglycinamide (FGAR). Formate is provided by PurU via hydrolysis of 10-formyl-tetrahydrofolate. This Shigella boydii serotype 18 (strain CDC 3083-94 / BS512) protein is Formate-dependent phosphoribosylglycinamide formyltransferase.